The following is a 366-amino-acid chain: MPSATPVIPSQQTAIVAEGAGQLSIYHDAPVPALQPDVALVKTAAVAINPVDAKMLDYSPVPGAIHGYDFAGTIVALGSDTPPHLKVGDRVAGFVHGMNPLLPDVGAFAEYVAASADLVLKLPDTMSFEEGASLGLGLFTAGLGLFQHLQIPLSLTREPSPEASSPTKADFVLVAGGSTATGTRALQLLKLAGLRPVATCSPAHFDLARRFGAEAVFDYHDPDCAAAIRAYTKNTLAYALDCLALAETTQLCYGALGRAGGRYVTLEPFREAIAAQRPHTVTPSWLLALTIFGRKVALDGEYGREANPEDREFGARLTEQVQGLLDEGKVDVHPVRVMGGGWQGVLEGVDLVRRQTVSGHKLVYAV.

The region spanning 19-363 (GAGQLSIYHD…RQTVSGHKLV (345 aa)) is the Enoyl reductase (ER) domain. Tyr219 contributes to the NADP(+) binding site.

It belongs to the zinc-containing alcohol dehydrogenase family. As to quaternary structure, monomer.

The protein operates within secondary metabolite biosynthesis. Functionally, trans-enoyl reductase; part of the gene cluster that produces the acyltetronic acid derivatives carlosic acid, agglomerin F and carlosic acid methyl ether. The PKS domains of caaA condenses two malonyl-CoAs into an acetyl starter unit, and form 1,3-diketohexanyl-ACP with the help of the trans-enoyl reductase caaB. Next, the C domain of caaA forms the ester bond between the acyl chain and L-malic acid (derived from the TCA cycle) and accepted by the A domain instead of an amino acid. Finally, the terminal reductase/Dieckmann cyclization (R/DKC) domain cyclizes the intermediate and releases the product as carlosic acid. Decarboxylation of carlosic acid followed by formation of the exocyclic double bond is likely to be catalyzed by the cytochrome P450 monooxygenase caaC. Thus, decarboxylation and oxidation would be coupled (performed by one enzyme) through concomitant abstraction of the hydrogen at C-4. Finally, sequential oxidations of the terminal C-10 methyl group to form carboxylic acid would be catalyzed by the 2-oxoglutarate-dependent dioxygenase caaD, which is required for the biosynthesis of agglomerin F. This chain is Trans-enoyl reductase caaB, found in Aspergillus niger (strain ATCC MYA-4892 / CBS 513.88 / FGSC A1513).